The following is a 281-amino-acid chain: MSQKTIRVGNIEIANDKPFVLFGGINVLESRDLAMQACEEYVRVTEKLGIPYVFKASFDKANRSSITSFRGPGLEEGMKIFEKVKKTFGVPVITDVHEPWQAQPVADVCDIIQLPAFLSRQTDLVVAMAKTGAVINIKKAQFLAPQEMKHILKKCEEAGNDQLILCERGSSFGYNNLVVDMLGFGIMKQFEYPVFFDVTHALQMPGGRADSAGGRRAQVTDLAKAGLSQGLAGLFLEAHPDPDNAKCDGPCALRLNKLEAFLTQLKQLDDLVKNFPPIETA.

The protein belongs to the KdsA family.

It is found in the cytoplasm. It carries out the reaction D-arabinose 5-phosphate + phosphoenolpyruvate + H2O = 3-deoxy-alpha-D-manno-2-octulosonate-8-phosphate + phosphate. The protein operates within carbohydrate biosynthesis; 3-deoxy-D-manno-octulosonate biosynthesis; 3-deoxy-D-manno-octulosonate from D-ribulose 5-phosphate: step 2/3. Its pathway is bacterial outer membrane biogenesis; lipopolysaccharide biosynthesis. This Stutzerimonas stutzeri (strain A1501) (Pseudomonas stutzeri) protein is 2-dehydro-3-deoxyphosphooctonate aldolase.